Consider the following 497-residue polypeptide: MKKATVGAAVIGAATVCAVAALIVNHRMRKSSKWARAMAILREFEEKCGTPDAKLKQVADAMTVEMHAGLASEGGSKLKMLITYVDNLPTGDEAGVFYALDLGGTNFRVLRVQLGGKDGGIVHQEFAEASIPPNLMVGTSEALFDYIAAELAKFVNEEGEKFQQPPGKQRELGFTFSFPVMQTSINSGTIMRWTKGFSIDDAVGQDVVGELAKAMKRKGVDMRVSALVNDTVGTLAGGKYTHNDVAVAVILGTGTNAAYVERVQAIPKWHGPVPKSGEMVINMEWGNFRSSHLPLTQYDHALDTNSLNPGDQIFEKMTSGMYLGEILRRVLLRVAEEAGIFGDEVPPKLKSPFVLRTPDMSAMHHDASSDLRVVGDKLKDILEISNTSLKTRRLVIELCNIVATRGARLAAAGVLGILKKMGRDTPRQGGLEKTVVAMDGGLYEHYTEYRMCLENTLKELLGDELATSIVFEHSNDGSGIGAALLAASNSMYLEDKS.

Residues 4–24 form a helical membrane-spanning segment; the sequence is ATVGAAVIGAATVCAVAALIV. The Hexokinase domain occupies 35–487; that stretch reads ARAMAILREF…SGIGAALLAA (453 aa). Positions 90–228 are hexokinase small subdomain; the sequence is TGDEAGVFYA…GVDMRVSALV (139 aa). ADP contacts are provided by Gly104, Thr105, and Asn106. D-glucose is bound by residues Thr194, Lys195, Asn229, and Asp230. The hexokinase large subdomain stretch occupies residues 229–476; the sequence is NDTVGTLAGG…TSIVFEHSND (248 aa). Thr253 contributes to the ADP binding site. The D-glucose site is built by Asn256, Glu284, and Glu315. Gly441 provides a ligand contact to ADP.

It belongs to the hexokinase family.

The protein resides in the plastid. Its subcellular location is the chloroplast outer membrane. It catalyses the reaction a D-hexose + ATP = a D-hexose 6-phosphate + ADP + H(+). The catalysed reaction is D-fructose + ATP = D-fructose 6-phosphate + ADP + H(+). The enzyme catalyses D-glucose + ATP = D-glucose 6-phosphate + ADP + H(+). The protein operates within carbohydrate metabolism; hexose metabolism. Its pathway is carbohydrate degradation; glycolysis; D-glyceraldehyde 3-phosphate and glycerone phosphate from D-glucose: step 1/4. Fructose and glucose phosphorylating enzyme. This is Hexokinase-1 (HXK1) from Nicotiana tabacum (Common tobacco).